The primary structure comprises 578 residues: A-type ATP synthase subunit A (578 aa).

Residue 228-235 (GPFGSGKT) coordinates ATP.

It belongs to the ATPase alpha/beta chains family. In terms of assembly, has multiple subunits with at least A(3), B(3), C, D, E, F, H, I and proteolipid K(x).

The protein localises to the cell membrane. It catalyses the reaction ATP + H2O + 4 H(+)(in) = ADP + phosphate + 5 H(+)(out). Functionally, component of the A-type ATP synthase that produces ATP from ADP in the presence of a proton gradient across the membrane. The A chain is the catalytic subunit. This chain is A-type ATP synthase subunit A, found in Methanosarcina acetivorans (strain ATCC 35395 / DSM 2834 / JCM 12185 / C2A).